Reading from the N-terminus, the 150-residue chain is D-aminoacyl-tRNA deacylase (150 aa).

The Gly-cisPro motif, important for rejection of L-amino acids signature appears at glycine 138–proline 139.

It belongs to the DTD family. As to quaternary structure, homodimer.

It localises to the cytoplasm. The enzyme catalyses glycyl-tRNA(Ala) + H2O = tRNA(Ala) + glycine + H(+). It carries out the reaction a D-aminoacyl-tRNA + H2O = a tRNA + a D-alpha-amino acid + H(+). Functionally, an aminoacyl-tRNA editing enzyme that deacylates mischarged D-aminoacyl-tRNAs. Also deacylates mischarged glycyl-tRNA(Ala), protecting cells against glycine mischarging by AlaRS. Acts via tRNA-based rather than protein-based catalysis; rejects L-amino acids rather than detecting D-amino acids in the active site. By recycling D-aminoacyl-tRNA to D-amino acids and free tRNA molecules, this enzyme counteracts the toxicity associated with the formation of D-aminoacyl-tRNA entities in vivo and helps enforce protein L-homochirality. This Cytophaga hutchinsonii (strain ATCC 33406 / DSM 1761 / CIP 103989 / NBRC 15051 / NCIMB 9469 / D465) protein is D-aminoacyl-tRNA deacylase.